The primary structure comprises 197 residues: Small ribosomal subunit protein uS4 (197 aa).

One can recognise an S4 RNA-binding domain in the interval 94–158 (RRLDNVIYRF…LKKYLYDYKN (65 aa)).

It belongs to the universal ribosomal protein uS4 family. As to quaternary structure, part of the 30S ribosomal subunit. Contacts protein S5. The interaction surface between S4 and S5 is involved in control of translational fidelity.

Its function is as follows. One of the primary rRNA binding proteins, it binds directly to 16S rRNA where it nucleates assembly of the body of the 30S subunit. In terms of biological role, with S5 and S12 plays an important role in translational accuracy. In Carsonella ruddii (strain PV), this protein is Small ribosomal subunit protein uS4 (rpsD).